A 545-amino-acid polypeptide reads, in one-letter code: MSSPWKTSQSSVPMPEMIVKIVGSKHFRYFIEKPMNKQNEKLKTEPQTSLQKPRNDYSRRVSRDLPGPTDSSEQQITANPAEKEESKHQRSSLKPESNQKFLTRVFSNRFLDGRISYEANVHCSSVPTGDQSLSYMHSLPRRKSVGWCLEHTAKDSSGQAEEIVQRPSVMTREDSFLTTLVRRELNSRPLSSNLLDKLQKELKTLDPISSGFLHQSQLSCLFLRHKVPLPLLTVKLLCQRFSRRCSPEMVNYGEVLCFLKEATKDNLQQNGTAGYSNSRKTSSPSYHKQSIPPQDSSLLSEVNKSLLEILKMALRPCQGKLSIDCLNMSFRKEDHSFSGCLPLPKVISICSKHGLYVTMTLLETLLHHQELGYRGEIKWKNFVKWLNRASADLSCDMPAGKNKKETQGDLVDIPERPQRKTEHVKTPEENLQTKNPTTMTSAPEDPVTFFKNRPVSQPVEHLAVKKDGQSELWIDRFRKLENALYLCDLSNTGVLERERARRLIHNYNLIYSLSLSPRRINQALQRYRSGENIILEPALQYLKEL.

2 stretches are compositionally biased toward basic and acidic residues: residues 34–44 (PMNKQNEKLKT) and 53–63 (PRNDYSRRVSR). Disordered stretches follow at residues 34–98 (PMNK…PESN), 269–296 (QNGTAGYSNSRKTSSPSYHKQSIPPQDS), and 415–444 (ERPQRKTEHVKTPEENLQTKNPTTMTSAPE). The segment covering 69–78 (TDSSEQQITA) has biased composition (polar residues). Residues 415–428 (ERPQRKTEHVKTPE) show a composition bias toward basic and acidic residues. Residues 429–441 (ENLQTKNPTTMTS) show a composition bias toward polar residues.

This is an uncharacterized protein from Mus musculus (Mouse).